The chain runs to 91 residues: MDLFKAFGGKSNSKDIAKERLQLLLVHDRIDTSPRFLEMIKEDILNVISNYVDIDEKGLRVEITKERKSDDTFISALHANIPIKKMKQVIR.

It belongs to the MinE family.

Its function is as follows. Prevents the cell division inhibition by proteins MinC and MinD at internal division sites while permitting inhibition at polar sites. This ensures cell division at the proper site by restricting the formation of a division septum at the midpoint of the long axis of the cell. In Caldanaerobacter subterraneus subsp. tengcongensis (strain DSM 15242 / JCM 11007 / NBRC 100824 / MB4) (Thermoanaerobacter tengcongensis), this protein is Cell division topological specificity factor.